A 286-amino-acid chain; its full sequence is 4-hydroxy-tetrahydrodipicolinate synthase (286 aa).

Thr-42 contributes to the pyruvate binding site. Catalysis depends on Tyr-129, which acts as the Proton donor/acceptor. The active-site Schiff-base intermediate with substrate is the Lys-157. Val-196 contributes to the pyruvate binding site.

The protein belongs to the DapA family. Homotetramer; dimer of dimers.

The protein localises to the cytoplasm. It carries out the reaction L-aspartate 4-semialdehyde + pyruvate = (2S,4S)-4-hydroxy-2,3,4,5-tetrahydrodipicolinate + H2O + H(+). The protein operates within amino-acid biosynthesis; L-lysine biosynthesis via DAP pathway; (S)-tetrahydrodipicolinate from L-aspartate: step 3/4. Catalyzes the condensation of (S)-aspartate-beta-semialdehyde [(S)-ASA] and pyruvate to 4-hydroxy-tetrahydrodipicolinate (HTPA). This Chlamydia muridarum (strain MoPn / Nigg) protein is 4-hydroxy-tetrahydrodipicolinate synthase.